A 402-amino-acid chain; its full sequence is Deoxyguanosinetriphosphate triphosphohydrolase-like protein (402 aa).

Positions 73-217 constitute an HD domain; sequence RLTHTIEVAQ…AAIADDIAYN (145 aa).

The protein belongs to the dGTPase family. Type 2 subfamily.

In Brucella anthropi (strain ATCC 49188 / DSM 6882 / CCUG 24695 / JCM 21032 / LMG 3331 / NBRC 15819 / NCTC 12168 / Alc 37) (Ochrobactrum anthropi), this protein is Deoxyguanosinetriphosphate triphosphohydrolase-like protein.